We begin with the raw amino-acid sequence, 549 residues long: Glucose-6-phosphate isomerase (549 aa).

The active-site Proton donor is the glutamate 355. Catalysis depends on residues histidine 386 and lysine 514.

Belongs to the GPI family.

Its subcellular location is the cytoplasm. It carries out the reaction alpha-D-glucose 6-phosphate = beta-D-fructose 6-phosphate. Its pathway is carbohydrate biosynthesis; gluconeogenesis. The protein operates within carbohydrate degradation; glycolysis; D-glyceraldehyde 3-phosphate and glycerone phosphate from D-glucose: step 2/4. Its function is as follows. Catalyzes the reversible isomerization of glucose-6-phosphate to fructose-6-phosphate. This chain is Glucose-6-phosphate isomerase, found in Salmonella agona (strain SL483).